A 186-amino-acid chain; its full sequence is Putative adenylate kinase (186 aa).

Residues G10, G12, K13, T14, and S15 each contribute to the ATP site. The NMP stretch occupies residues 30-53 (HLNELIKEEHLYTEVDEKRDSVVA). An LID region spans residues 108-118 (KRGYSEEKVNE). Residue R109 coordinates ATP.

The protein belongs to the adenylate kinase family. AK6 subfamily. In terms of assembly, interacts with uS11. Not a structural component of 40S pre-ribosomes, but transiently interacts with them by binding to uS11.

It catalyses the reaction AMP + ATP = 2 ADP. The enzyme catalyses ATP + H2O = ADP + phosphate + H(+). Broad-specificity nucleoside monophosphate (NMP) kinase that catalyzes the reversible transfer of the terminal phosphate group between nucleoside triphosphates and monophosphates. Also has ATPase activity. Involved in the late maturation steps of the 30S ribosomal particles, specifically 16S rRNA maturation. While NMP activity is not required for ribosome maturation, ATPase activity is. Associates transiently with small ribosomal subunit protein uS11. ATP hydrolysis breaks the interaction with uS11. May temporarily remove uS11 from the ribosome to enable a conformational change of the ribosomal RNA that is needed for the final maturation step of the small ribosomal subunit. The polypeptide is Putative adenylate kinase (Methanosarcina acetivorans (strain ATCC 35395 / DSM 2834 / JCM 12185 / C2A)).